The sequence spans 221 residues: MSDENKQPHPMSQRFRGFLPVVVDVETAGFNPERDALLEIAAVMLTMDEDGWLRRGETHVQQIDPFEGANLEQSALDFTGIDPWNPEREAVPEREGLSEIFSPIRKAVKEHDCKRAVLVGHNATFDHNFVFAAALRADIKRNPFHPFSTFDTATLAGLAYGHTVLAQACKLAGIPFSNKEAHSAAYDAEKTADLFCGIVNRWRELGGFPPPPIEIAEEPQE.

The Exonuclease domain maps to 21-195 (VVVDVETAGF…YDAEKTADLF (175 aa)). Residues aspartate 24, glutamate 26, histidine 182, and aspartate 187 each coordinate Mg(2+). Residue histidine 182 is the Proton donor/acceptor of the active site.

This sequence belongs to the RNase T family. Homodimer. Requires Mg(2+) as cofactor.

Trims short 3' overhangs of a variety of RNA species, leaving a one or two nucleotide 3' overhang. Responsible for the end-turnover of tRNA: specifically removes the terminal AMP residue from uncharged tRNA (tRNA-C-C-A). Also appears to be involved in tRNA biosynthesis. This Marinobacter nauticus (strain ATCC 700491 / DSM 11845 / VT8) (Marinobacter aquaeolei) protein is Ribonuclease T.